A 144-amino-acid polypeptide reads, in one-letter code: uncharacterized protein (144 aa).

Helical transmembrane passes span 76–96 and 105–125; these read LLSALLMYVVPLLTLLIVTML and ILRAILIFGLTALSFILVKSY.

This sequence belongs to the RseC family.

The protein localises to the cell inner membrane. This is an uncharacterized protein from Haemophilus influenzae (strain ATCC 51907 / DSM 11121 / KW20 / Rd).